The chain runs to 318 residues: Polyprenal reductase (318 aa).

The Cytoplasmic portion of the chain corresponds to 1 to 11; that stretch reads MAPWAEAEHSA. A helical membrane pass occupies residues 12 to 34; that stretch reads LNPLRAVWLTLTAAFLLTLLLQL. The Lumenal segment spans residues 35-80; sequence LPPGLLPGCAIFQDLIRYGKTKCGEPSRPAACRAFDVPKRYFSHFY. The chain crosses the membrane as a helical span at residues 81 to 101; sequence IISVLWNGFLLWCLTQSLFLG. The Cytoplasmic portion of the chain corresponds to 102–117; it reads APFPSWLHGLLRILGA. A helical membrane pass occupies residues 118-138; sequence AQFQGGELALSAFLVLVFLWL. At 139–157 the chain is on the lumenal side; it reads HSLRRLFECLYVSVFSNVM. A helical membrane pass occupies residues 158–178; that stretch reads IHVVQYCFGLVYYVLVGLTVL. Residues 179–194 are Cytoplasmic-facing; that stretch reads SQVPMDGRNAYITGKN. Residues 195–215 traverse the membrane as a helical segment; it reads LLMQARWFHILGMMMFIWSSA. Over 216–260 the chain is Lumenal; it reads HQYKCHVILGNLRKNKAGVVIHCNHRIPFGDWFEYVSSPNYLAEL. Residues 261-281 form a helical membrane-spanning segment; the sequence is MIYVSMAVTFGFHNLTWWLVV. The Cytoplasmic segment spans residues 282 to 318; the sequence is TNVFFNQALSAFLSHQFYKSKFVSYPKHRKAFLPFLF.

This sequence belongs to the steroid 5-alpha reductase family. Polyprenal reductase subfamily. Expressed in preadipocytes (at protein level). Overexpressed in hormone-refractory prostate cancers (HRPC). Almost no or little expression in normal adult organs.

It is found in the endoplasmic reticulum membrane. The catalysed reaction is a di-trans,poly-cis-dolichal + NADP(+) = a di-trans,poly-cis-polyprenal + NADPH + H(+). It carries out the reaction a 3-oxo-5alpha-steroid + NADP(+) = a 3-oxo-Delta(4)-steroid + NADPH + H(+). It catalyses the reaction androst-4-ene-3,17-dione + NADPH + H(+) = 5alpha-androstan-3,17-dione + NADP(+). The enzyme catalyses 17beta-hydroxy-5alpha-androstan-3-one + NADP(+) = testosterone + NADPH + H(+). It participates in protein modification; protein glycosylation. In terms of biological role, plays a key role in early steps of protein N-linked glycosylation by being involved in the conversion of polyprenol into dolichol. Acts as a polyprenal reductase that mediates the reduction of polyprenal into dolichal in a NADP-dependent mechanism. Dolichols are required for the synthesis of dolichol-linked monosaccharides and the oligosaccharide precursor used for N-glycosylation. Also able to convert testosterone (T) into 5-alpha-dihydrotestosterone (DHT). This Homo sapiens (Human) protein is Polyprenal reductase.